The primary structure comprises 181 residues: Oleosin (181 aa).

The segment at 1–28 (TTTTYDRHFTTTQPHYRQDDRSRYDQQT) is disordered. The tract at residues 1–38 (TTTTYDRHFTTTQPHYRQDDRSRYDQQTHSQSTSRTLA) is polar. Basic and acidic residues predominate over residues 16 to 26 (YRQDDRSRYDQ). A run of 3 helical transmembrane segments spans residues 38–58 (AIIA…LTFI), 69–89 (PLFV…GLAV), and 90–110 (TGFL…SYLF). Residues 39-110 (IIALLPVGGI…TGLSSLSYLF (72 aa)) are hydrophobic. Residues 155–181 (EMGDQGQVGVHAQVGGGKEGRKSGDRT) are disordered. Positions 158–167 (DQGQVGVHAQ) are enriched in low complexity. Residues 172–181 (KEGRKSGDRT) are compositionally biased toward basic and acidic residues.

Belongs to the oleosin family.

The protein localises to the lipid droplet. The protein resides in the membrane. In terms of biological role, may have a structural role to stabilize the lipid body during desiccation of the seed by preventing coalescence of the oil. Probably interacts with both lipid and phospholipid moieties of lipid bodies. May also provide recognition signals for specific lipase anchorage in lipolysis during seedling growth. The chain is Oleosin from Helianthus annuus (Common sunflower).